We begin with the raw amino-acid sequence, 494 residues long: Chromosomal replication initiator protein DnaA (494 aa).

Residues methionine 1–serine 103 form a domain I, interacts with DnaA modulators region. The tract at residues proline 94–aspartate 117 is disordered. Residues serine 101–alanine 113 show a composition bias toward low complexity. Residues valine 104–valine 153 are domain II. Positions asparagine 154–alanine 370 are domain III, AAA+ region. ATP is bound by residues glycine 198, glycine 200, lysine 201, and threonine 202. The segment at serine 371 to arginine 494 is domain IV, binds dsDNA.

This sequence belongs to the DnaA family. Oligomerizes as a right-handed, spiral filament on DNA at oriC.

It is found in the cytoplasm. In terms of biological role, plays an essential role in the initiation and regulation of chromosomal replication. ATP-DnaA binds to the origin of replication (oriC) to initiate formation of the DNA replication initiation complex once per cell cycle. Binds the DnaA box (a 9 base pair repeat at the origin) and separates the double-stranded (ds)DNA. Forms a right-handed helical filament on oriC DNA; dsDNA binds to the exterior of the filament while single-stranded (ss)DNA is stabiized in the filament's interior. The ATP-DnaA-oriC complex binds and stabilizes one strand of the AT-rich DNA unwinding element (DUE), permitting loading of DNA polymerase. After initiation quickly degrades to an ADP-DnaA complex that is not apt for DNA replication. Binds acidic phospholipids. The protein is Chromosomal replication initiator protein DnaA of Mycolicibacterium vanbaalenii (strain DSM 7251 / JCM 13017 / BCRC 16820 / KCTC 9966 / NRRL B-24157 / PYR-1) (Mycobacterium vanbaalenii).